An 839-amino-acid polypeptide reads, in one-letter code: Taste receptor type 1 member 2 (839 aa).

The N-terminal stretch at 1–19 is a signal peptide; the sequence is MGPRATTICSLFFLLWVLA. Residues 20–566 are Extracellular-facing; the sequence is EPAENSDFYL…AFLEWHEAPT (547 aa). N-linked (GlcNAc...) asparagine glycans are attached at residues asparagine 84, asparagine 248, asparagine 292, asparagine 312, asparagine 368, asparagine 428, asparagine 487, and asparagine 527. A helical transmembrane segment spans residues 567 to 587; that stretch reads IAVALLAALGFLSTLAILVIF. Residues 588–602 are Cytoplasmic-facing; it reads WRHFQTPMVRSAGGP. The chain crosses the membrane as a helical span at residues 603 to 623; it reads MCFLMLTLLLVAYMVVPVYVG. Over 624–635 the chain is Extracellular; the sequence is PPKVSTCLCRQA. Residues 636-656 traverse the membrane as a helical segment; that stretch reads LFPLCFTICISCIAVRSFQII. Over 657–681 the chain is Cytoplasmic; sequence CAFKMASRFPRAYSYWVRYQGPYVS. A helical transmembrane segment spans residues 682-702; the sequence is MAFITVLKMVIVVIGMLATGL. Residues 703–727 are Extracellular-facing; it reads NPTTRTDPDDPKIMIVSCNPNYRNS. The chain crosses the membrane as a helical span at residues 728 to 748; the sequence is LLFNTSLDLLLSVVGFSFANM. Topologically, residues 749-760 are cytoplasmic; it reads GKELPTNYNEAK. The chain crosses the membrane as a helical span at residues 761–781; sequence FITLSMTFYFTSSISLCTFMS. The Extracellular portion of the chain corresponds to 782-784; the sequence is AYS. A helical transmembrane segment spans residues 785–805; the sequence is GVLVTIVDLLVTVLNLLAISL. The Cytoplasmic segment spans residues 806 to 839; the sequence is GYFGPKCYMILFYPERNTPAYFNSVIQGYTMTRD.

It belongs to the G-protein coupled receptor 3 family. TAS1R subfamily. As to quaternary structure, forms heterodimers with TAS1R3.

It is found in the cell membrane. Its function is as follows. Putative taste receptor. TAS1R2/TAS1R3 recognizes diverse natural and synthetic sweeteners. This chain is Taste receptor type 1 member 2 (TAS1R2), found in Pongo pygmaeus (Bornean orangutan).